A 500-amino-acid polypeptide reads, in one-letter code: Hexokinase-3 (500 aa).

The chain crosses the membrane as a helical span at residues 4–24 (VGLGVAVGCAAVTCAIAAALV). In terms of domain architecture, Hexokinase spans 35-487 (RRAVALLREF…SGVGAALLAA (453 aa)). Residues 90–222 (SGSEEGVYYS…GLNVRVTALV (133 aa)) form a hexokinase small subdomain region. Residues G104, T105, and N106 each coordinate ADP. 4 residues coordinate D-glucose: T188, K189, N223, and D224. The tract at residues 223–476 (NDTVGTLALG…RNVTLRVTED (254 aa)) is hexokinase large subdomain. S247 contributes to the ADP binding site. The D-glucose site is built by N250, E278, and E309. An ADP-binding site is contributed by G441.

The protein belongs to the hexokinase family. In terms of tissue distribution, expressed in roots, leaves, flowers, immature seeds and seed coat. Expressed in young shoots, tiller buds, endosperm seven days after fertilization, and interconnecting tissues such as pulvini and nodes.

It localises to the mitochondrion outer membrane. It carries out the reaction a D-hexose + ATP = a D-hexose 6-phosphate + ADP + H(+). It catalyses the reaction D-fructose + ATP = D-fructose 6-phosphate + ADP + H(+). The enzyme catalyses D-glucose + ATP = D-glucose 6-phosphate + ADP + H(+). It participates in carbohydrate metabolism; hexose metabolism. Its pathway is carbohydrate degradation; glycolysis; D-glyceraldehyde 3-phosphate and glycerone phosphate from D-glucose: step 1/4. In terms of biological role, fructose and glucose phosphorylating enzyme. Involved in the regulation of cell expansion in spikelet hulls, grain size, and gibberellin biosynthesis and homeostasis. This Oryza sativa subsp. japonica (Rice) protein is Hexokinase-3.